The sequence spans 205 residues: Peptidyl-tRNA hydrolase (205 aa).

Residue tyrosine 18 participates in tRNA binding. Catalysis depends on histidine 23, which acts as the Proton acceptor. Residues tyrosine 69, asparagine 71, and asparagine 117 each coordinate tRNA.

It belongs to the PTH family. Monomer.

The protein resides in the cytoplasm. It catalyses the reaction an N-acyl-L-alpha-aminoacyl-tRNA + H2O = an N-acyl-L-amino acid + a tRNA + H(+). Hydrolyzes ribosome-free peptidyl-tRNAs (with 1 or more amino acids incorporated), which drop off the ribosome during protein synthesis, or as a result of ribosome stalling. Functionally, catalyzes the release of premature peptidyl moieties from peptidyl-tRNA molecules trapped in stalled 50S ribosomal subunits, and thus maintains levels of free tRNAs and 50S ribosomes. In Synechococcus sp. (strain CC9605), this protein is Peptidyl-tRNA hydrolase.